Reading from the N-terminus, the 313-residue chain is Type II restriction enzyme BsuMI component YdiR (313 aa).

Residues Phe-289 to Asn-313 are disordered.

BsuMI restriction activity requires YdiR, YdiS and YdjA.

The enzyme catalyses Endonucleolytic cleavage of DNA to give specific double-stranded fragments with terminal 5'-phosphates.. Functionally, a P subtype restriction enzyme that recognizes the double-stranded sequence 5'-CTCGAG-3'; the cleavage site is unknown. This chain is Type II restriction enzyme BsuMI component YdiR (ydiR), found in Bacillus subtilis (strain 168).